Reading from the N-terminus, the 90-residue chain is Large ribosomal subunit protein bL27 (90 aa).

This sequence belongs to the bacterial ribosomal protein bL27 family.

The protein is Large ribosomal subunit protein bL27 of Rhodopseudomonas palustris (strain BisB5).